Consider the following 302-residue polypeptide: Recombination-associated protein RdgC (302 aa).

This sequence belongs to the RdgC family.

The protein localises to the cytoplasm. It localises to the nucleoid. Functionally, may be involved in recombination. The polypeptide is Recombination-associated protein RdgC (Tolumonas auensis (strain DSM 9187 / NBRC 110442 / TA 4)).